A 176-amino-acid chain; its full sequence is Prenylated Rab acceptor 1 (176 aa).

N-acetylmethionine is present on Met1. The SKL peroxisome targeting motif motif lies at 11 to 13; that stretch reads SRF. A Phosphoserine modification is found at Ser18. The next 2 membrane-spanning stretches (helical) occupy residues 84–104 and 129–149; these read LLTN…IVGI and VCVA…LWLI.

Belongs to the PRA1 family. As to quaternary structure, interacts with YIP1 and the Rab GTPases SEC4, YPT1, YPT6, YPT10, YPT11, YPT31, YPT32 and YPT52.

The protein resides in the golgi apparatus membrane. It is found in the peroxisome membrane. The chain is Prenylated Rab acceptor 1 (YIP3) from Saccharomyces cerevisiae (strain ATCC 204508 / S288c) (Baker's yeast).